The primary structure comprises 817 residues: Probable inorganic carbon transporter subunit DabA (817 aa).

Cys-301, Asp-303, His-491, and Cys-506 together coordinate Zn(2+). Disordered stretches follow at residues 598–617 (NTSV…ERRA) and 794–817 (GWHA…GVPS).

The protein belongs to the inorganic carbon transporter (TC 9.A.2) DabA family. Forms a complex with DabB. The cofactor is Zn(2+).

It is found in the cell inner membrane. Part of an energy-coupled inorganic carbon pump. In Salinibacter ruber (strain DSM 13855 / M31), this protein is Probable inorganic carbon transporter subunit DabA.